A 157-amino-acid chain; its full sequence is Endoribonuclease YbeY (157 aa).

Positions 123, 127, and 133 each coordinate Zn(2+).

The protein belongs to the endoribonuclease YbeY family. The cofactor is Zn(2+).

It is found in the cytoplasm. Its function is as follows. Single strand-specific metallo-endoribonuclease involved in late-stage 70S ribosome quality control and in maturation of the 3' terminus of the 16S rRNA. In Desulfitobacterium hafniense (strain Y51), this protein is Endoribonuclease YbeY.